We begin with the raw amino-acid sequence, 593 residues long: Mitoguardin 2 (593 aa).

Transmembrane regions (helical) follow at residues 11 to 31 (MIQA…TTFG) and 42 to 62 (PGLR…ALAA). Disordered regions lie at residues 98 to 134 (PSVK…HSGS), 150 to 171 (TAAC…TTDG), and 197 to 229 (VGQR…PESQ). 2 stretches are compositionally biased toward low complexity: residues 106–116 (SRRVQSPSSKS) and 124–134 (SSIEPSKHSGS). Serine 132 is subject to Phosphoserine. Residues 205 to 218 (STPTPGDSLQNPDT) are compositionally biased toward polar residues. A Phosphothreonine modification is found at threonine 206. Residues serine 220, serine 224, and serine 228 each carry the phosphoserine modification. Position 273 is a phosphothreonine (threonine 273). Phosphoserine is present on residues serine 276 and serine 295. The FFAT motif lies at 292–298 (SFFSATE).

Belongs to the mitoguardin family. Homodimer and heterodimer; forms heterodimers with MIGA1. Interacts with PLD6/MitoPLD. Interacts (via phosphorylated FFAT motif) with MOSPD2. Phosphorylation at Ser-295 of the FFAT motif activates interaction with MOSPD2.

Its subcellular location is the mitochondrion outer membrane. Its function is as follows. Regulator of mitochondrial fusion. Acts by forming homo- and heterodimers at the mitochondrial outer membrane and facilitating the formation of PLD6/MitoPLD dimers. May act by regulating phospholipid metabolism via PLD6/MitoPLD. The sequence is that of Mitoguardin 2 from Mus musculus (Mouse).